A 277-amino-acid polypeptide reads, in one-letter code: Tumor necrosis factor receptor superfamily member 4 (277 aa).

Positions 1–28 (MCVGARRLGRGPCAALLLLGLGLSTVTG) are cleaved as a signal peptide. Topologically, residues 29–214 (LHCVGDTYPS…RPVEVPGGRA (186 aa)) are extracellular. TNFR-Cys repeat units lie at residues 30 to 65 (HCVG…TVCR) and 66 to 107 (PCGP…DTVC). 8 cysteine pairs are disulfide-bonded: cysteine 31/cysteine 42, cysteine 43/cysteine 56, cysteine 46/cysteine 64, cysteine 67/cysteine 81, cysteine 84/cysteine 99, cysteine 87/cysteine 107, cysteine 109/cysteine 125, and cysteine 128/cysteine 141. The stretch at 108–126 (RCRAGTQPLDSYKPGVDCA) is one TNFR-Cys 3; truncated repeat. Residues 127 to 167 (PCPPGHFSPGDNQACKPWTNCTLAGKHTLQPASNSSDAICE) form a TNFR-Cys 4 repeat. Asparagine 146 and asparagine 160 each carry an N-linked (GlcNAc...) asparagine glycan. Cysteine 147 and cysteine 166 are oxidised to a cystine. The segment at 158-209 (ASNSSDAICEDRDPPATQPQETQGPPARPITVQPTEAWPRTSQGPSTRPVEV) is disordered. Residues 215 to 235 (VAAILGLGLVLGLLGPLAILL) traverse the membrane as a helical segment. At 236–277 (ALYLLRRDQRLPPDAHKPPGGGSFRTPIQEEQADAHSTLAKI) the chain is on the cytoplasmic side. Residues 248 to 277 (PDAHKPPGGGSFRTPIQEEQADAHSTLAKI) form a disordered region.

As to quaternary structure, interacts with TRAF2, TRAF3 and TRAF5. (Microbial infection) Interacts with Human herpesvirus 6B/HHV-6B gQ1:gQ2 proteins.

The protein resides in the membrane. Functionally, receptor for TNFSF4/OX40L/GP34. Is a costimulatory molecule implicated in long-term T-cell immunity. (Microbial infection) Acts as a receptor for human herpesvirus 6B/HHV-6B. In Homo sapiens (Human), this protein is Tumor necrosis factor receptor superfamily member 4 (TNFRSF4).